The chain runs to 101 residues: NADH-quinone oxidoreductase subunit K (101 aa).

A run of 3 helical transmembrane segments spans residues 4–24 (LAHY…GIFL), 30–50 (IIIL…FVAF), and 61–81 (IFVF…LAIL).

The protein belongs to the complex I subunit 4L family. NDH-1 is composed of 14 different subunits. Subunits NuoA, H, J, K, L, M, N constitute the membrane sector of the complex.

Its subcellular location is the cell inner membrane. It carries out the reaction a quinone + NADH + 5 H(+)(in) = a quinol + NAD(+) + 4 H(+)(out). Functionally, NDH-1 shuttles electrons from NADH, via FMN and iron-sulfur (Fe-S) centers, to quinones in the respiratory chain. The immediate electron acceptor for the enzyme in this species is believed to be ubiquinone. Couples the redox reaction to proton translocation (for every two electrons transferred, four hydrogen ions are translocated across the cytoplasmic membrane), and thus conserves the redox energy in a proton gradient. The polypeptide is NADH-quinone oxidoreductase subunit K (Paraburkholderia xenovorans (strain LB400)).